The sequence spans 245 residues: E3 ubiquitin-protein ligase RNF138 (245 aa).

An RING-type zinc finger spans residues Cys-18–Arg-58. The Zn(2+) site is built by Cys-86, Cys-89, His-101, and Cys-105. The segment at Cys-86–Cys-105 adopts a C2HC RNF-type zinc-finger fold. A disordered region spans residues Val-128–His-154. A Phosphothreonine modification is found at Thr-142. 2 C2H2-type zinc fingers span residues Phe-157–His-180 and Val-187–His-215. Residues Leu-225 to Val-243 form the UIM domain.

Interacts with NLK. Interacts with XRCC5/Ku80. Interacts with RBBP8/CtIP. Auto-ubiquitinated.

The protein resides in the chromosome. It carries out the reaction S-ubiquitinyl-[E2 ubiquitin-conjugating enzyme]-L-cysteine + [acceptor protein]-L-lysine = [E2 ubiquitin-conjugating enzyme]-L-cysteine + N(6)-ubiquitinyl-[acceptor protein]-L-lysine.. Its pathway is protein modification; protein ubiquitination. E3 ubiquitin-protein ligase involved in DNA damage response by promoting DNA resection and homologous recombination. Recruited to sites of double-strand breaks following DNA damage and specifically promotes double-strand break repair via homologous recombination. Two different, non-exclusive, mechanisms have been proposed. According to a report, regulates the choice of double-strand break repair by favoring homologous recombination over non-homologous end joining (NHEJ): acts by mediating ubiquitination of XRCC5/Ku80, leading to remove the Ku complex from DNA breaks, thereby promoting homologous recombination. According to another report, cooperates with UBE2Ds E2 ubiquitin ligases (UBE2D1, UBE2D2, UBE2D3 or UBE2D4) to promote homologous recombination by mediating ubiquitination of RBBP8/CtIP. Together with NLK, involved in the ubiquitination and degradation of TCF/LEF. Also exhibits auto-ubiquitination activity in combination with UBE2K. May act as a negative regulator in the Wnt/beta-catenin-mediated signaling pathway. This Mus musculus (Mouse) protein is E3 ubiquitin-protein ligase RNF138.